The primary structure comprises 361 residues: Peroxidase A (361 aa).

The protein belongs to the peroxidase family. In terms of processing, partially N-glycosylated.

Its subcellular location is the secreted. The catalysed reaction is 2 a phenolic donor + H2O2 = 2 a phenolic radical donor + 2 H2O. This Aloe vera (Aloe) protein is Peroxidase A.